We begin with the raw amino-acid sequence, 196 residues long: GTP cyclohydrolase-2 (196 aa).

Residue 49–53 coordinates GTP; it reads RVHSE. The Zn(2+) site is built by cysteine 54, cysteine 65, and cysteine 67. GTP is bound by residues glutamine 70, 92 to 94, and threonine 114; that span reads EGR. Aspartate 126 acts as the Proton acceptor in catalysis. Arginine 128 serves as the catalytic Nucleophile. Residues threonine 149 and lysine 154 each coordinate GTP.

It belongs to the GTP cyclohydrolase II family. In terms of assembly, homodimer. Zn(2+) is required as a cofactor.

It carries out the reaction GTP + 4 H2O = 2,5-diamino-6-hydroxy-4-(5-phosphoribosylamino)-pyrimidine + formate + 2 phosphate + 3 H(+). It functions in the pathway cofactor biosynthesis; riboflavin biosynthesis; 5-amino-6-(D-ribitylamino)uracil from GTP: step 1/4. In terms of biological role, catalyzes the conversion of GTP to 2,5-diamino-6-ribosylamino-4(3H)-pyrimidinone 5'-phosphate (DARP), formate and pyrophosphate. This is GTP cyclohydrolase-2 from Yersinia pestis.